Consider the following 465-residue polypeptide: Ribulose bisphosphate carboxylase large chain (465 aa).

Residue K4 is modified to N6,N6,N6-trimethyllysine. Residues N113 and T163 each contribute to the substrate site. K165 serves as the catalytic Proton acceptor. A substrate-binding site is contributed by K167. 3 residues coordinate Mg(2+): K191, D193, and E194. K191 bears the N6-carboxylysine mark. Catalysis depends on H284, which acts as the Proton acceptor. The substrate site is built by R285, H317, and S369.

The protein belongs to the RuBisCO large chain family. Type I subfamily. As to quaternary structure, heterohexadecamer of 8 large chains and 8 small chains; disulfide-linked. The disulfide link is formed within the large subunit homodimers. Mg(2+) serves as cofactor. The disulfide bond which can form in the large chain dimeric partners within the hexadecamer appears to be associated with oxidative stress and protein turnover.

Its subcellular location is the plastid. The protein localises to the chloroplast. The catalysed reaction is 2 (2R)-3-phosphoglycerate + 2 H(+) = D-ribulose 1,5-bisphosphate + CO2 + H2O. The enzyme catalyses D-ribulose 1,5-bisphosphate + O2 = 2-phosphoglycolate + (2R)-3-phosphoglycerate + 2 H(+). RuBisCO catalyzes two reactions: the carboxylation of D-ribulose 1,5-bisphosphate, the primary event in carbon dioxide fixation, as well as the oxidative fragmentation of the pentose substrate in the photorespiration process. Both reactions occur simultaneously and in competition at the same active site. The protein is Ribulose bisphosphate carboxylase large chain of Ulmus alata (Winged elm).